Reading from the N-terminus, the 157-residue chain is Transcriptional repressor NrdR (157 aa).

A zinc finger lies at 3–34 (CPHCHQNSSRVIDSRPTDEGRVIRRRRECENC). Residues 49-139 (LLVIKKNGTR…VYRQFKDMNV (91 aa)) enclose the ATP-cone domain.

This sequence belongs to the NrdR family. The cofactor is Zn(2+).

Functionally, negatively regulates transcription of bacterial ribonucleotide reductase nrd genes and operons by binding to NrdR-boxes. The polypeptide is Transcriptional repressor NrdR (Latilactobacillus sakei subsp. sakei (strain 23K) (Lactobacillus sakei subsp. sakei)).